We begin with the raw amino-acid sequence, 610 residues long: WD repeat-containing protein 46 (610 aa).

A disordered region spans residues 1-103 (METAPKPGKD…TQDPFPGPAP (103 aa)). Over residues 7-19 (PGKDVPPKKDKLQ) the composition is skewed to basic and acidic residues. S41 carries the phosphoserine modification. A compositionally biased stretch (basic residues) spans 65–77 (KKSRISKKPQVPK). WD repeat units follow at residues 193–234 (LRQF…CEIN), 235–272 (VMEAVRDIRFLHSEALLAVAQNRWLHIYDNQGIELHCI), 274–312 (RCDRVTRLEFLPFHFLLATASETGFLTYLDVSVGKIVAA), 315–354 (ARAGRLDVMSQNPYNAVIHLGHSNGTVSLWSPAMKEPLAK), 357–396 (CHRGGVRAVAVDSTGTYMATSGLDHQLKIFDLRGTYQPLS), and 399–436 (TLPHGAGHLAFSQRGLLVAGMGDVVNIWAGQGKASPPS). Residues 538–610 (ERLGYDPQAK…RPSALDRFVR (73 aa)) form a disordered region. Over residues 572–582 (VMDEEHRDKVR) the composition is skewed to basic and acidic residues.

Part of the small subunit (SSU) processome, composed of more than 70 proteins and the RNA chaperone small nucleolar RNA (snoRNA) U3. Interacts with DDX21, NCL, NOP2 and EBNA1BP2.

The protein localises to the nucleus. Its subcellular location is the nucleolus. Scaffold component of the nucleolar structure. Required for localization of DDX21 and NCL to the granular compartment of the nucleolus. Part of the small subunit (SSU) processome, first precursor of the small eukaryotic ribosomal subunit. During the assembly of the SSU processome in the nucleolus, many ribosome biogenesis factors, an RNA chaperone and ribosomal proteins associate with the nascent pre-rRNA and work in concert to generate RNA folding, modifications, rearrangements and cleavage as well as targeted degradation of pre-ribosomal RNA by the RNA exosome. This is WD repeat-containing protein 46 (WDR46) from Homo sapiens (Human).